Consider the following 547-residue polypeptide: (E)-beta-caryophyllene synthase (547 aa).

The Mg(2+) site is built by Asp302 and Asp306. Positions 302, 306, 443, and 446 each coordinate substrate. A DDXXD motif motif is present at residues 302–306 (DDLYD). Residues Asn446 and Glu454 each contribute to the Mg(2+) site.

It belongs to the terpene synthase family. In terms of assembly, monomer. Mg(2+) serves as cofactor. The cofactor is Mn(2+).

Its subcellular location is the cytoplasm. It carries out the reaction (2E,6E)-farnesyl diphosphate = (-)-(E)-beta-caryophyllene + diphosphate. Its pathway is secondary metabolite biosynthesis; terpenoid biosynthesis. In terms of biological role, component of the volatile terpenes biosynthesis pathways. Sesquiterpene synthase that converts farnesyl diphosphate to (E)-beta-caryophyllene. Involved in indirect defense by producing volatile signals attracting natural enemies of herbivores. This is (E)-beta-caryophyllene synthase from Zea mays (Maize).